Consider the following 374-residue polypeptide: P2Y purinoceptor 2 (374 aa).

Topologically, residues 1-32 (MAAGLDSWNSTINGTWEGDELGYKCRFNEDFK) are extracellular. N-linked (GlcNAc...) asparagine glycosylation is found at N9 and N13. Residues 33-59 (YVLLPVSYGVVCVLGLCLNVVALYIFL) traverse the membrane as a helical segment. Residues 60-70 (CRLKTWNASTT) are Cytoplasmic-facing. Residues 71–93 (YMFHLAVSDSLYAASLPLLVYYY) traverse the membrane as a helical segment. The Extracellular portion of the chain corresponds to 94 to 110 (AQGDHWPFSTVLCKLVR). C106 and C183 are disulfide-bonded. A helical transmembrane segment spans residues 111–129 (FLFYTNLYCSILFLTCISV). The Cytoplasmic segment spans residues 130 to 152 (HRCLGVLRPLHSLSWGHARYARR). Residues 153-172 (VAAVVWVLVLACQAPVLYFV) traverse the membrane as a helical segment. Residues 173–194 (TTSVRGTRITCHDTSARELFSH) are Extracellular-facing. Residues 195–220 (FVAYSSVMLGLLFAVPFSIILVCYVL) form a helical membrane-spanning segment. Topologically, residues 221–245 (MARRLLKPAYGTTGLPRAKRKSVRT) are cytoplasmic. The helical transmembrane segment at 246–268 (IALVLAVFALCFLPFHVTRTLYY) threads the bilayer. The Extracellular segment spans residues 269–286 (SFRSLDLSCHTLNAINMA). The helical transmembrane segment at 287–308 (YKITRPLASANSCLDPVLYFLA) threads the bilayer. The Cytoplasmic portion of the chain corresponds to 309 to 374 (GQRLVRFARD…AGSETKDIRL (66 aa)). A disordered region spans residues 318-374 (DAKPATEPTPSPQARRKLGLHRPNRTDTVRKDLSISSDDSRRTESTPAGSETKDIRL). The span at 331 to 340 (ARRKLGLHRP) shows a compositional bias: basic residues. The segment covering 341–361 (NRTDTVRKDLSISSDDSRRTE) has biased composition (basic and acidic residues).

This sequence belongs to the G-protein coupled receptor 1 family.

The protein resides in the cell membrane. Functionally, receptor for ATP and UTP coupled to G-proteins that activate a phosphatidylinositol-calcium second messenger system. The affinity range is UTP = ATP &gt; ATP-gamma-S &gt;&gt; 2-methylthio-ATP = ADP. This Rattus norvegicus (Rat) protein is P2Y purinoceptor 2 (P2ry2).